The primary structure comprises 246 residues: Mast cell protease 2 (246 aa).

The N-terminal stretch at 1–19 is a signal peptide; the sequence is MHRPPLPLVLLLLCCRAQA. The propeptide at 20–21 is activation peptide; that stretch reads GE. Residues 22–244 form the Peptidase S1 domain; the sequence is IIGGTESKPH…YRPWIDEVLK (223 aa). An intrachain disulfide couples C51 to C67. Residues H66 and D109 each act as charge relay system in the active site. N120 carries an N-linked (GlcNAc...) asparagine glycan. 2 disulfides stabilise this stretch: C143/C208 and C174/C187. The active-site Charge relay system is S202.

Belongs to the peptidase S1 family. Granzyme subfamily.

Its subcellular location is the secreted. It is found in the cytoplasmic granule. In terms of biological role, putative mast cell chymase. This chain is Mast cell protease 2, found in Ovis aries (Sheep).